A 335-amino-acid chain; its full sequence is L-carnitine dehydrogenase (335 aa).

An NAD(+)-binding site is contributed by 29–34; that stretch reads GTGVIG.

The protein belongs to the 3-hydroxyacyl-CoA dehydrogenase family. L-carnitine dehydrogenase subfamily. As to quaternary structure, homodimer.

The protein resides in the cytoplasm. The enzyme catalyses carnitine + NAD(+) = 3-dehydrocarnitine + NADH + H(+). Its pathway is amine and polyamine metabolism; carnitine metabolism. Catalyzes the NAD(+)-dependent oxidation of L-carnitine to 3-dehydrocarnitine. This Streptomyces griseus subsp. griseus (strain JCM 4626 / CBS 651.72 / NBRC 13350 / KCC S-0626 / ISP 5235) protein is L-carnitine dehydrogenase.